The chain runs to 419 residues: L-rhamnose isomerase (419 aa).

Mn(2+)-binding residues include His262, Asp294, and Asp296.

It belongs to the rhamnose isomerase family. As to quaternary structure, homotetramer. Mn(2+) is required as a cofactor.

It localises to the cytoplasm. The enzyme catalyses L-rhamnopyranose = L-rhamnulose. It participates in carbohydrate degradation; L-rhamnose degradation; glycerone phosphate from L-rhamnose: step 1/3. Catalyzes the interconversion of L-rhamnose and L-rhamnulose. This Salmonella paratyphi A (strain AKU_12601) protein is L-rhamnose isomerase.